Reading from the N-terminus, the 107-residue chain is Insulin-like peptide 6 (107 aa).

The first 33 residues, 1–33, serve as a signal peptide directing secretion; it reads MVLKVPTSKVLLVLATLFAVAAMISSWMPQVAA. 3 disulfide bridges follow: Cys-48–Cys-91, Cys-60–Cys-105, and Cys-90–Cys-96. The propeptide at 67 to 76 is connecting peptide; it reads LGDVFPNSFG.

Belongs to the insulin family. In terms of assembly, heterodimer of a B chain and an A chain linked by two disulfide bonds. In terms of tissue distribution, expressed at a low level in the larval gut.

Its subcellular location is the secreted. Its function is as follows. Possible ligand of InR/insulin-like receptor. The sequence is that of Insulin-like peptide 6 from Drosophila melanogaster (Fruit fly).